A 438-amino-acid polypeptide reads, in one-letter code: Gamma-glutamyl phosphate reductase (438 aa).

It belongs to the gamma-glutamyl phosphate reductase family.

It is found in the cytoplasm. It catalyses the reaction L-glutamate 5-semialdehyde + phosphate + NADP(+) = L-glutamyl 5-phosphate + NADPH + H(+). Its pathway is amino-acid biosynthesis; L-proline biosynthesis; L-glutamate 5-semialdehyde from L-glutamate: step 2/2. Functionally, catalyzes the NADPH-dependent reduction of L-glutamate 5-phosphate into L-glutamate 5-semialdehyde and phosphate. The product spontaneously undergoes cyclization to form 1-pyrroline-5-carboxylate. The chain is Gamma-glutamyl phosphate reductase from Prochlorococcus marinus (strain MIT 9303).